A 367-amino-acid polypeptide reads, in one-letter code: Phospho-N-acetylmuramoyl-pentapeptide-transferase (367 aa).

Helical transmembrane passes span 16–36 (LLLA…WVHF), 62–82 (TMGG…FNLV), 87–107 (MLLP…DDWL), 125–145 (FWIM…PQPY), 158–178 (VGEV…IVFI), 190–210 (SLAG…TFLA), 214–234 (LTNL…FLWY), 240–260 (QVFM…VVAL), 264–284 (QWIL…STLI), and 326–346 (FVLI…IFGS).

Belongs to the glycosyltransferase 4 family. MraY subfamily. Mg(2+) is required as a cofactor.

It localises to the cell membrane. The catalysed reaction is UDP-N-acetyl-alpha-D-muramoyl-L-alanyl-gamma-D-glutamyl-meso-2,6-diaminopimeloyl-D-alanyl-D-alanine + di-trans,octa-cis-undecaprenyl phosphate = di-trans,octa-cis-undecaprenyl diphospho-N-acetyl-alpha-D-muramoyl-L-alanyl-D-glutamyl-meso-2,6-diaminopimeloyl-D-alanyl-D-alanine + UMP. It participates in cell wall biogenesis; peptidoglycan biosynthesis. Its function is as follows. Catalyzes the initial step of the lipid cycle reactions in the biosynthesis of the cell wall peptidoglycan: transfers peptidoglycan precursor phospho-MurNAc-pentapeptide from UDP-MurNAc-pentapeptide onto the lipid carrier undecaprenyl phosphate, yielding undecaprenyl-pyrophosphoryl-MurNAc-pentapeptide, known as lipid I. The polypeptide is Phospho-N-acetylmuramoyl-pentapeptide-transferase (Chloroflexus aggregans (strain MD-66 / DSM 9485)).